A 207-amino-acid chain; its full sequence is Dephospho-CoA kinase (207 aa).

A DPCK domain is found at 10–207; sequence ILGLTGGIGS…FYLTLRGGQS (198 aa). 18–23 contributes to the ATP binding site; that stretch reads GSGKSA.

Belongs to the CoaE family.

It is found in the cytoplasm. The enzyme catalyses 3'-dephospho-CoA + ATP = ADP + CoA + H(+). It functions in the pathway cofactor biosynthesis; coenzyme A biosynthesis; CoA from (R)-pantothenate: step 5/5. Catalyzes the phosphorylation of the 3'-hydroxyl group of dephosphocoenzyme A to form coenzyme A. This Pseudomonas syringae pv. tomato (strain ATCC BAA-871 / DC3000) protein is Dephospho-CoA kinase.